We begin with the raw amino-acid sequence, 627 residues long: Endoglucanase 5 (627 aa).

A signal peptide spans Met-1–Ala-26. The active-site Nucleophile is Asp-83. A glycan (N-linked (GlcNAc...) asparagine) is linked at Asn-196. Residue His-416 is part of the active site. An N-linked (GlcNAc...) asparagine glycan is attached at Asn-465. Active-site residues include Asp-468 and Glu-477. Asn-561 is a glycosylation site (N-linked (GlcNAc...) asparagine).

The protein belongs to the glycosyl hydrolase 9 (cellulase E) family.

It is found in the secreted. It catalyses the reaction Endohydrolysis of (1-&gt;4)-beta-D-glucosidic linkages in cellulose, lichenin and cereal beta-D-glucans.. In Arabidopsis thaliana (Mouse-ear cress), this protein is Endoglucanase 5.